Reading from the N-terminus, the 124-residue chain is Histone H2A, embryonic (124 aa).

The span at 1–18 (MSGRGKSGKARTKAKTRS) shows a compositional bias: basic residues. A disordered region spans residues 1–21 (MSGRGKSGKARTKAKTRSSRA). S2 carries the N-acetylserine modification. Residue S2 is modified to Phosphoserine. Residue Q104 is modified to N5-methylglutamine. K119 participates in a covalent cross-link: Glycyl lysine isopeptide (Lys-Gly) (interchain with G-Cter in ubiquitin).

The protein belongs to the histone H2A family. The nucleosome is a histone octamer containing two molecules each of H2A, H2B, H3 and H4 assembled in one H3-H4 heterotetramer and two H2A-H2B heterodimers. The octamer wraps approximately 147 bp of DNA. In terms of processing, monoubiquitination of Lys-119 gives a specific tag for epigenetic transcriptional repression. Phosphorylation of Ser-2 directly represses transcription.

It localises to the nucleus. Its subcellular location is the chromosome. Core component of nucleosome. Nucleosomes wrap and compact DNA into chromatin, limiting DNA accessibility to the cellular machineries which require DNA as a template. Histones thereby play a central role in transcription regulation, DNA repair, DNA replication and chromosomal stability. DNA accessibility is regulated via a complex set of post-translational modifications of histones, also called histone code, and nucleosome remodeling. The sequence is that of Histone H2A, embryonic from Psammechinus miliaris (Green sea urchin).